The primary structure comprises 463 residues: Perilipin-5 (463 aa).

The segment at 1-32 is disordered; sequence MDQRGEDTTLAPHSRMSGDQTAQDPGSSLGEL. An interaction with LIPE region spans residues 1–123; it reads MDQRGEDTTL…KLEEKLPFLQ (123 aa). Residues 1–188 form an essential for lipid droplet targeting region; it reads MDQRGEDTTL…RFLPMTEAEL (188 aa). 3 positions are modified to phosphoserine: serine 17, serine 163, and serine 337. Polar residues predominate over residues 17–26; sequence SGDQTAQDPG. The interval 200 to 463 is interaction with PNPLA2 and ABHD5; that stretch reads VGTVEEQRQQ…KHTMMPELDF (264 aa). Residues 433-463 are disordered; that stretch reads AWEAESADPGGQEAEPPRGQGKHTMMPELDF. Residues 444-463 are necessary for mitochondria recruitment at the lipid droplet surface; that stretch reads QEAEPPRGQGKHTMMPELDF.

This sequence belongs to the perilipin family. In terms of assembly, homooligomer. Interacts with PNPLA2; prevents interaction of PNPLA2 with ABHD5. Interacts with ABHD5; targets ABHD5 to lipid droplets and promotes interaction of ABHD5 with PNPLA2. Interacts with LIPE. Phosphorylated by PKA. Phosphorylated on serine in skeletal muscle at rest or with lipolytic stimulation. In terms of tissue distribution, highly expressed in oxidative tissues, including heart, liver, brown adipose tissue (BAT) and slow-twitch fibers of skeletal muscle. Lower expression in epididymal white adipose tissue and anterior tibialis and quadriceps. Expressed in adrenal glands. Isoform 2 has the highest expression in heart.

The protein resides in the lipid droplet. Its subcellular location is the cytoplasm. The protein localises to the mitochondrion. Lipid droplet-associated protein that maintains the balance between lipogenesis and lipolysis and also regulates fatty acid oxidation in oxidative tissues. Recruits mitochondria to the surface of lipid droplets and is involved in lipid droplet homeostasis by regulating both the storage of fatty acids in the form of triglycerides and the release of fatty acids for mitochondrial fatty acid oxidation. In lipid droplet triacylglycerol hydrolysis, plays a role as a scaffolding protein for three major key lipolytic players: ABHD5, PNPLA2 and LIPE. Reduces the triacylglycerol hydrolase activity of PNPLA2 by recruiting and sequestering PNPLA2 to lipid droplets. Phosphorylation by PKA enables lipolysis probably by promoting release of ABHD5 from the perilipin scaffold and by facilitating interaction of ABHD5 with PNPLA2. Also increases lipolysis through interaction with LIPE and upon PKA-mediated phosphorylation of LIPE. The protein is Perilipin-5 (Plin5) of Mus musculus (Mouse).